A 55-amino-acid polypeptide reads, in one-letter code: ATP synthase F(0) complex subunit 8 (55 aa).

A helical transmembrane segment spans residues 4–24 (LNPSPWFIILLFSWVIFMVIL).

The protein belongs to the ATPase protein 8 family. Component of the ATP synthase complex composed at least of ATP5F1A/subunit alpha, ATP5F1B/subunit beta, ATP5MC1/subunit c (homooctomer), MT-ATP6/subunit a, MT-ATP8/subunit 8, ATP5ME/subunit e, ATP5MF/subunit f, ATP5MG/subunit g, ATP5MK/subunit k, ATP5MJ/subunit j, ATP5F1C/subunit gamma, ATP5F1D/subunit delta, ATP5F1E/subunit epsilon, ATP5PF/subunit F6, ATP5PB/subunit b, ATP5PD/subunit d, ATP5PO/subunit OSCP. ATP synthase complex consists of a soluble F(1) head domain (subunits alpha(3) and beta(3)) - the catalytic core - and a membrane F(0) domain - the membrane proton channel (subunits c, a, 8, e, f, g, k and j). These two domains are linked by a central stalk (subunits gamma, delta, and epsilon) rotating inside the F1 region and a stationary peripheral stalk (subunits F6, b, d, and OSCP).

The protein localises to the mitochondrion membrane. Functionally, subunit 8, of the mitochondrial membrane ATP synthase complex (F(1)F(0) ATP synthase or Complex V) that produces ATP from ADP in the presence of a proton gradient across the membrane which is generated by electron transport complexes of the respiratory chain. ATP synthase complex consist of a soluble F(1) head domain - the catalytic core - and a membrane F(1) domain - the membrane proton channel. These two domains are linked by a central stalk rotating inside the F(1) region and a stationary peripheral stalk. During catalysis, ATP synthesis in the catalytic domain of F(1) is coupled via a rotary mechanism of the central stalk subunits to proton translocation. In vivo, can only synthesize ATP although its ATP hydrolase activity can be activated artificially in vitro. Part of the complex F(0) domain. The protein is ATP synthase F(0) complex subunit 8 of Scyliorhinus canicula (Small-spotted catshark).